A 296-amino-acid polypeptide reads, in one-letter code: 4-hydroxybenzoate octaprenyltransferase (296 aa).

Transmembrane regions (helical) follow at residues Ile28–Ile48, Leu51–Ile71, Leu102–Leu122, Phe143–Phe163, Ala174–Met194, Phe212–Ala232, Val233–Leu253, and Phe274–Phe294.

The protein belongs to the UbiA prenyltransferase family. Mg(2+) is required as a cofactor.

Its subcellular location is the cell inner membrane. The catalysed reaction is all-trans-octaprenyl diphosphate + 4-hydroxybenzoate = 4-hydroxy-3-(all-trans-octaprenyl)benzoate + diphosphate. It functions in the pathway cofactor biosynthesis; ubiquinone biosynthesis. Catalyzes the prenylation of para-hydroxybenzoate (PHB) with an all-trans polyprenyl group. Mediates the second step in the final reaction sequence of ubiquinone-8 (UQ-8) biosynthesis, which is the condensation of the polyisoprenoid side chain with PHB, generating the first membrane-bound Q intermediate 3-octaprenyl-4-hydroxybenzoate. In Neisseria gonorrhoeae (strain ATCC 700825 / FA 1090), this protein is 4-hydroxybenzoate octaprenyltransferase.